The sequence spans 289 residues: Light-independent protochlorophyllide reductase iron-sulfur ATP-binding protein (289 aa).

ATP-binding positions include 10 to 15 (GIGKST) and Lys39. Ser14 serves as a coordination point for Mg(2+). [4Fe-4S] cluster is bound by residues Cys95 and Cys129. 180-181 (NR) contacts ATP.

This sequence belongs to the NifH/BchL/ChlL family. As to quaternary structure, homodimer. Protochlorophyllide reductase is composed of three subunits; ChlL, ChlN and ChlB. The cofactor is [4Fe-4S] cluster.

Its subcellular location is the plastid. It localises to the chloroplast. The catalysed reaction is chlorophyllide a + oxidized 2[4Fe-4S]-[ferredoxin] + 2 ADP + 2 phosphate = protochlorophyllide a + reduced 2[4Fe-4S]-[ferredoxin] + 2 ATP + 2 H2O. It functions in the pathway porphyrin-containing compound metabolism; chlorophyll biosynthesis (light-independent). Its function is as follows. Component of the dark-operative protochlorophyllide reductase (DPOR) that uses Mg-ATP and reduced ferredoxin to reduce ring D of protochlorophyllide (Pchlide) to form chlorophyllide a (Chlide). This reaction is light-independent. The L component serves as a unique electron donor to the NB-component of the complex, and binds Mg-ATP. The protein is Light-independent protochlorophyllide reductase iron-sulfur ATP-binding protein of Marchantia polymorpha (Common liverwort).